The chain runs to 435 residues: Bifunctional protein GlmU (435 aa).

The interval 1–224 (MNDTSIIILA…EQNFMGINDK (224 aa)) is pyrophosphorylase. UDP-N-acetyl-alpha-D-glucosamine contacts are provided by residues 9 to 12 (LAAG), K23, Q75, and 82 to 83 (GT). Residue D103 participates in Mg(2+) binding. Residues G136, E150, N165, and N222 each coordinate UDP-N-acetyl-alpha-D-glucosamine. N222 lines the Mg(2+) pocket. Positions 225–245 (FQLSVAEKIMQDEIKQDLMKA) are linker. The tract at residues 246-435 (GVLMRLPESI…KFFGKNNAEK (190 aa)) is N-acetyltransferase. UDP-N-acetyl-alpha-D-glucosamine is bound by residues R309 and K326. H337 (proton acceptor) is an active-site residue. Y340 and N351 together coordinate UDP-N-acetyl-alpha-D-glucosamine. Acetyl-CoA is bound by residues 360 to 361 (NY), S379, A397, and R414.

In the N-terminal section; belongs to the N-acetylglucosamine-1-phosphate uridyltransferase family. The protein in the C-terminal section; belongs to the transferase hexapeptide repeat family. Homotrimer. It depends on Mg(2+) as a cofactor.

The protein resides in the cytoplasm. The catalysed reaction is alpha-D-glucosamine 1-phosphate + acetyl-CoA = N-acetyl-alpha-D-glucosamine 1-phosphate + CoA + H(+). It carries out the reaction N-acetyl-alpha-D-glucosamine 1-phosphate + UTP + H(+) = UDP-N-acetyl-alpha-D-glucosamine + diphosphate. It participates in nucleotide-sugar biosynthesis; UDP-N-acetyl-alpha-D-glucosamine biosynthesis; N-acetyl-alpha-D-glucosamine 1-phosphate from alpha-D-glucosamine 6-phosphate (route II): step 2/2. Its pathway is nucleotide-sugar biosynthesis; UDP-N-acetyl-alpha-D-glucosamine biosynthesis; UDP-N-acetyl-alpha-D-glucosamine from N-acetyl-alpha-D-glucosamine 1-phosphate: step 1/1. The protein operates within bacterial outer membrane biogenesis; LPS lipid A biosynthesis. Functionally, catalyzes the last two sequential reactions in the de novo biosynthetic pathway for UDP-N-acetylglucosamine (UDP-GlcNAc). The C-terminal domain catalyzes the transfer of acetyl group from acetyl coenzyme A to glucosamine-1-phosphate (GlcN-1-P) to produce N-acetylglucosamine-1-phosphate (GlcNAc-1-P), which is converted into UDP-GlcNAc by the transfer of uridine 5-monophosphate (from uridine 5-triphosphate), a reaction catalyzed by the N-terminal domain. In Campylobacter curvus (strain 525.92), this protein is Bifunctional protein GlmU.